The primary structure comprises 97 residues: Probable lipopolysaccharide assembly protein A (97 aa).

2 helical membrane passes run 1–21 and 46–66; these read MIKY…AITI and VAIL…FFYI. Residues 67-95 adopt a coiled-coil conformation; the sequence is KLKLKNMALARQVKRQTLQINELTTTRDK.

It belongs to the LapA family.

The protein localises to the cell inner membrane. In terms of biological role, involved in the assembly of lipopolysaccharide (LPS). The sequence is that of Probable lipopolysaccharide assembly protein A from Haemophilus influenzae (strain ATCC 51907 / DSM 11121 / KW20 / Rd).